The chain runs to 82 residues: Mu-conotoxin MrVIB (82 aa).

Positions 1 to 22 (MKLTCMMIVAVLFLTAWTLVMA) are cleaved as a signal peptide. Residues 23 to 49 (DDSNNGLANHFLKSRDEMEDPEASKLE) constitute a propeptide that is removed on maturation. 3 disulfide bridges follow: cysteine 53–cysteine 71, cysteine 60–cysteine 76, and cysteine 70–cysteine 81.

Belongs to the conotoxin O1 superfamily. In terms of tissue distribution, expressed by the venom duct.

It localises to the secreted. Its function is as follows. MuO-conotoxins are gating-modifier toxins that inhibit sodium current by trapping the domain II voltage sensor in the closed position to prevent opening of the sodium channel. This toxin has a preference for Nav1.4/SCN4A over Nav1.2/SCN2A sodium channels. It blocks Nav channels by interacting mainly with the C-terminal part of the pore loop of domain-3. It also blocks fast-inactivating calcium current. Blocks Nav1.8/SCN10A sodium channels and has potent and long-lasting local anesthetic effects. It can also block propagation of action potentials in A- and C-fibers in sciatic nerve as well as skeletal muscle in isolated preparations. The polypeptide is Mu-conotoxin MrVIB (Conus marmoreus (Marble cone)).